The following is a 360-amino-acid chain: Cannabinoid receptor 2 (360 aa).

Over 1–33 the chain is Extracellular; sequence MAGCRELELTNGSNGGLEFNPMKEYMILSDAQQ. The N-linked (GlcNAc...) asparagine glycan is linked to asparagine 11. A helical transmembrane segment spans residues 34 to 59; that stretch reads IAVAVLCTLMGLLSALENVAVLYLIL. Residues 60-71 are Cytoplasmic-facing; that stretch reads SSQRLRRKPSYL. The helical transmembrane segment at 72-92 threads the bilayer; the sequence is FIGSLAGADFLASVIFACNFV. The Extracellular segment spans residues 93–104; sequence IFHVFHGVDSRN. The chain crosses the membrane as a helical span at residues 105–129; that stretch reads IFLLKIGSVTMTFTASVGSLLLTAV. Residues 130–149 are Cytoplasmic-facing; sequence DRYLCLCYPPTYKALVTRGR. The helical transmembrane segment at 150–172 threads the bilayer; sequence ALVALGVMWVLSALISYLPLMGW. Topologically, residues 173 to 188 are extracellular; sequence TCCPSPCSELFPLIPN. The helical transmembrane segment at 189–214 threads the bilayer; the sequence is DYLLGWLLFIAILFSGIIYTYGYVLW. Over 215-246 the chain is Cytoplasmic; sequence KAHQHVASLAEHQDRQVPGIARMRLDVRLAKT. Residues 247 to 267 traverse the membrane as a helical segment; it reads LGLVMAVLLICWFPALALMGH. Over 268-279 the chain is Extracellular; it reads SLVTTLSDKVKE. Residues 280–301 form a helical membrane-spanning segment; it reads AFAFCSMLCLVNSMINPIIYAL. The Cytoplasmic portion of the chain corresponds to 302–360; sequence RSGEIRSAAQHCLTGWKKYLQGLGSEGKEEAPKSSVTETEAEVKTTTGPGSRTPGCSNC. The segment at 327–360 is disordered; the sequence is EGKEEAPKSSVTETEAEVKTTTGPGSRTPGCSNC. Serine 335 and serine 336 each carry phosphoserine. Residue threonine 338 is modified to Phosphothreonine. A compositionally biased stretch (polar residues) spans 349–360; sequence GPGSRTPGCSNC. At serine 352 the chain carries Phosphoserine.

This sequence belongs to the G-protein coupled receptor 1 family. In terms of processing, constitutively phosphorylated on Ser-352; phosphorylation increases cell internalization and desensitizes the receptor. In terms of tissue distribution, expressed in spleen and brain by neurons and glial cells (at protein level). Expressed in lung, testis and thymus but not in heart, liver or kidney. Expressed in cerebellum, cortex and brainstem.

It localises to the cell membrane. It is found in the cell projection. The protein localises to the dendrite. Its subcellular location is the perikaryon. In terms of biological role, heterotrimeric G protein-coupled receptor for endocannabinoid 2-arachidonoylglycerol mediating inhibition of adenylate cyclase. May function in inflammatory response, nociceptive transmission and bone homeostasis. In Rattus norvegicus (Rat), this protein is Cannabinoid receptor 2 (Cnr2).